A 158-amino-acid polypeptide reads, in one-letter code: C-type lectin mannose-binding isoform (158 aa).

Positions 1–20 (MGRFLLVTLSMLVVTFSLNE) are cleaved as a signal peptide. 3 disulfide bridges follow: Cys-26-Cys-37, Cys-54-Cys-154, and Cys-129-Cys-146. The C-type lectin domain maps to 33-155 (KNGFCYKVFN…CEALYHFICQ (123 aa)). Residues 119–121 (EPN) carry the Mannose-binding motif. Asn-121 carries an N-linked (GlcNAc...) asparagine glycan. Positions 127, 142, and 143 each coordinate Ca(2+).

Belongs to the true venom lectin family. As to quaternary structure, homodimer; disulfide-linked. Expressed by the venom gland.

It localises to the secreted. In terms of biological role, mannose-binding lectin that binds to and agglutinates erythrocytes in a calcium-dependent manner. The sequence is that of C-type lectin mannose-binding isoform from Notechis scutatus scutatus (Mainland tiger snake).